Here is a 480-residue protein sequence, read N- to C-terminus: UDP-N-acetylmuramate--L-alanine ligase (480 aa).

Position 127–133 (glycine 127–threonine 133) interacts with ATP.

Belongs to the MurCDEF family.

It is found in the cytoplasm. It catalyses the reaction UDP-N-acetyl-alpha-D-muramate + L-alanine + ATP = UDP-N-acetyl-alpha-D-muramoyl-L-alanine + ADP + phosphate + H(+). The protein operates within cell wall biogenesis; peptidoglycan biosynthesis. In terms of biological role, cell wall formation. The protein is UDP-N-acetylmuramate--L-alanine ligase of Blochmanniella floridana.